Here is a 292-residue protein sequence, read N- to C-terminus: Peroxisomal 2,4-dienoyl-CoA reductase [(3E)-enoyl-CoA-producing] (292 aa).

Residues 35–40 (GGGSGI), 60–64 (RSLPR), and Asp86 contribute to the NADP(+) site. Arg60 is a binding site for substrate. Residues Arg88, Phe118, and 126–128 (SFN) contribute to the substrate site. Lys151 is modified (N6-acetyllysine). NADP(+) contacts are provided by residues Lys182 and 208 to 214 (PGAISGT). Residue Arg219 participates in substrate binding. Ser287 is subject to Phosphoserine. The Microbody targeting signal signature appears at 290 to 292 (AKL). Lys291 is subject to N6-acetyllysine.

This sequence belongs to the short-chain dehydrogenases/reductases (SDR) family. 2,4-dienoyl-CoA reductase subfamily. As to quaternary structure, monomer, dimer and oligomer.

The protein localises to the peroxisome. It catalyses the reaction a (2E,4Z)-dienoyl-CoA + NADPH + H(+) = a 4,5-saturated-(3E)-enoyl-CoA + NADP(+). The catalysed reaction is a (2E,4E)-dienoyl-CoA + NADPH + H(+) = a 4,5-saturated-(3E)-enoyl-CoA + NADP(+). It carries out the reaction (2E,4E)-hexadienoyl-CoA + NADPH + H(+) = (3E)-hexenoyl-CoA + NADP(+). The enzyme catalyses (2E,4E)-decadienoyl-CoA + NADPH + H(+) = (3E)-decenoyl-CoA + NADP(+). It catalyses the reaction (2E,4Z,7Z,10Z,13Z,16Z,19Z)-docosaheptaenoyl-CoA + NADPH + H(+) = (3E,7Z,10Z,13Z,16Z,19Z)-docosahexaenoyl-CoA + NADP(+). Functionally, auxiliary enzyme of beta-oxidation. Participates in the degradation of unsaturated fatty enoyl-CoA esters having double bonds in both even- and odd-numbered positions in peroxisome. Catalyzes the NADP-dependent reduction of 2,4-dienoyl-CoA to yield trans-3-enoyl-CoA. Has activity towards short and medium chain 2,4-dienoyl-CoAs, but also towards 2,4,7,10,13,16,19-docosaheptaenoyl-CoA, suggesting that it does not constitute a rate limiting step in the peroxisomal degradation of docosahexaenoic acid. This Rattus norvegicus (Rat) protein is Peroxisomal 2,4-dienoyl-CoA reductase [(3E)-enoyl-CoA-producing] (Decr2).